Reading from the N-terminus, the 156-residue chain is Small ribosomal subunit protein uS7c (156 aa).

It belongs to the universal ribosomal protein uS7 family. Part of the 30S ribosomal subunit.

Its subcellular location is the plastid. It localises to the chloroplast. Its function is as follows. One of the primary rRNA binding proteins, it binds directly to 16S rRNA where it nucleates assembly of the head domain of the 30S subunit. The chain is Small ribosomal subunit protein uS7c (rps7) from Cycas revoluta (Sago palm).